The following is a 117-amino-acid chain: Large ribosomal subunit protein uL18 (117 aa).

It belongs to the universal ribosomal protein uL18 family. As to quaternary structure, part of the 50S ribosomal subunit; part of the 5S rRNA/L5/L18/L25 subcomplex. Contacts the 5S and 23S rRNAs.

In terms of biological role, this is one of the proteins that bind and probably mediate the attachment of the 5S RNA into the large ribosomal subunit, where it forms part of the central protuberance. The protein is Large ribosomal subunit protein uL18 of Thiobacillus denitrificans (strain ATCC 25259 / T1).